The sequence spans 680 residues: MTTFSTCAAFLSLVVVLHAVHVGGAILESQAPHRELKAYRPLQDNNLQEVYASSAAAVHYDPDLKDVNIVATYSDHYGNIRLGRVKMGDLSPSWVLENPAYQVSRKTKGSQLVIPRDSFQNDTGMEDNASHSTTNQTDESENQFPNVDFASPAKLKRQILRQERRGQRTLELIRQEKETDEQMQEAAIQKSMSFENSVIGKYSIWRRDYESPNADAILKLMRDQIIMAKAYANIAKSKNVTNLYVFLMQQCGENKRVIGKATSDADLPSSALDQAKAMGHALSLAKDELYDCHELAKKFRAILQSTERKVDGLKKKGTFLIQLAAKTFPKPLHCLSLQLAADYFILGFNEEDAVKEDVSQKKLEDPSLYHYAIFSDNVLATSVVVNSTVLNAKEPQRHVFHIVTDKLNFGAMKMWFRINAPADATIQVENINDFKWLNSSYCSVLRQLESARLKEYYFKANHPSSISAGADNLKYRNPKYLSMLNHLRFYLPEVYPKLEKILFLDDDIVVQKDLAPLWEIDMQGKVNGAVETCKESFHRFDKYLNFSNPKISENFDAGACGWAFGMNMFDLKEWRKRNITGIYHYWQDLNEDRTLWKLGSLPPGLITFYNLTYAMDRSWHVLGLGYDPALNQTAIENAAVVHYNGNYKPWLGLAFAKYKPYWSKYVEYDNPYLRRCDINE.

Over 1-6 (MTTFST) the chain is Cytoplasmic. The helical; Signal-anchor for type II membrane protein transmembrane segment at 7–27 (CAAFLSLVVVLHAVHVGGAIL) threads the bilayer. Topologically, residues 28–680 (ESQAPHRELK…PYLRRCDINE (653 aa)) are lumenal. The tract at residues 118-146 (SFQNDTGMEDNASHSTTNQTDESENQFPN) is disordered. 10 N-linked (GlcNAc...) asparagine glycosylation sites follow: asparagine 121, asparagine 128, asparagine 135, asparagine 239, asparagine 386, asparagine 438, asparagine 545, asparagine 578, asparagine 610, and asparagine 631. The segment covering 130-145 (SHSTTNQTDESENQFP) has biased composition (polar residues).

This sequence belongs to the glycosyltransferase 8 family. In terms of tissue distribution, expressed in roots, inflorescences, siliques, leaves and stems.

The protein resides in the golgi apparatus membrane. The protein operates within glycan metabolism; pectin biosynthesis. Its function is as follows. May be involved in pectin and/or xylans biosynthesis in cell walls. The sequence is that of Probable galacturonosyltransferase 3 (GAUT3) from Arabidopsis thaliana (Mouse-ear cress).